We begin with the raw amino-acid sequence, 399 residues long: Chalcone synthase 2 (399 aa).

Residue Cys-166 is part of the active site.

The protein belongs to the thiolase-like superfamily. Chalcone/stilbene synthases family.

The catalysed reaction is (E)-4-coumaroyl-CoA + 3 malonyl-CoA + 3 H(+) = 2',4,4',6'-tetrahydroxychalcone + 3 CO2 + 4 CoA. It functions in the pathway secondary metabolite biosynthesis; flavonoid biosynthesis. In terms of biological role, the primary product of this enzyme is 4,2',4',6'-tetrahydroxychalcone (also termed naringenin-chalcone or chalcone) which can under specific conditions spontaneously isomerize into naringenin. Substrate preference is feruloyl-CoA = caffeoyl-CoA &gt;&gt; cinnamoyl-CoA. The polypeptide is Chalcone synthase 2 (CHS2) (Hordeum vulgare (Barley)).